A 340-amino-acid polypeptide reads, in one-letter code: Probable complex I intermediate-associated protein 30, mitochondrial (340 aa).

It belongs to the CIA30 family.

It is found in the mitochondrion. Chaperone protein involved in the assembly of the mitochondrial NADH:ubiquinone oxidoreductase complex (complex I). Required for normal growth and reproduction. This chain is Probable complex I intermediate-associated protein 30, mitochondrial (nuaf-1), found in Caenorhabditis briggsae.